Reading from the N-terminus, the 116-residue chain is NADH-ubiquinone oxidoreductase chain 3 (116 aa).

3 helical membrane passes run 3–23 (LITT…TISF), 56–76 (FFLI…LLPL), and 85–105 (PALT…GLIY).

The protein belongs to the complex I subunit 3 family.

Its subcellular location is the mitochondrion membrane. It carries out the reaction a ubiquinone + NADH + 5 H(+)(in) = a ubiquinol + NAD(+) + 4 H(+)(out). Functionally, core subunit of the mitochondrial membrane respiratory chain NADH dehydrogenase (Complex I) that is believed to belong to the minimal assembly required for catalysis. Complex I functions in the transfer of electrons from NADH to the respiratory chain. The immediate electron acceptor for the enzyme is believed to be ubiquinone. The sequence is that of NADH-ubiquinone oxidoreductase chain 3 (MT-ND3) from Salmo salar (Atlantic salmon).